We begin with the raw amino-acid sequence, 325 residues long: Beta-ketoacyl-[acyl-carrier-protein] synthase III (325 aa).

Residues Cys-119 and His-252 contribute to the active site. The tract at residues Gln-253–Arg-257 is ACP-binding. The active site involves Asn-282.

Belongs to the thiolase-like superfamily. FabH family. As to quaternary structure, homodimer.

It localises to the cytoplasm. The enzyme catalyses malonyl-[ACP] + acetyl-CoA + H(+) = 3-oxobutanoyl-[ACP] + CO2 + CoA. It functions in the pathway lipid metabolism; fatty acid biosynthesis. Its function is as follows. Catalyzes the condensation reaction of fatty acid synthesis by the addition to an acyl acceptor of two carbons from malonyl-ACP. Catalyzes the first condensation reaction which initiates fatty acid synthesis and may therefore play a role in governing the total rate of fatty acid production. Possesses both acetoacetyl-ACP synthase and acetyl transacylase activities. Its substrate specificity determines the biosynthesis of branched-chain and/or straight-chain of fatty acids. This Delftia acidovorans (strain DSM 14801 / SPH-1) protein is Beta-ketoacyl-[acyl-carrier-protein] synthase III.